Reading from the N-terminus, the 161-residue chain is S-ribosylhomocysteine lyase (161 aa).

Fe cation contacts are provided by His-57, His-61, and Cys-127.

This sequence belongs to the LuxS family. Homodimer. It depends on Fe cation as a cofactor.

The catalysed reaction is S-(5-deoxy-D-ribos-5-yl)-L-homocysteine = (S)-4,5-dihydroxypentane-2,3-dione + L-homocysteine. In terms of biological role, involved in the synthesis of autoinducer 2 (AI-2) which is secreted by bacteria and is used to communicate both the cell density and the metabolic potential of the environment. The regulation of gene expression in response to changes in cell density is called quorum sensing. Catalyzes the transformation of S-ribosylhomocysteine (RHC) to homocysteine (HC) and 4,5-dihydroxy-2,3-pentadione (DPD). The polypeptide is S-ribosylhomocysteine lyase (Streptococcus equi subsp. equi (strain 4047)).